A 221-amino-acid chain; its full sequence is HTH-type transcriptional regulator McbR (221 aa).

Positions V10 to V77 constitute an HTH gntR-type domain. The segment at residues T37–L56 is a DNA-binding region (H-T-H motif).

Important for biofilm formation. Represses expression of McbA by binding to its promoter region, which prevents colanic acid overproduction and mucoidy. The chain is HTH-type transcriptional regulator McbR (mcbR) from Escherichia coli (strain K12).